The primary structure comprises 296 residues: MFYANMKEFELIKLVERLFGDEDVITPAGKHDAAYVKIGNRLIVLTCDTVNEKSDFPPYMLPEEMGWMAIAVTLSDVAACGARPLYFLSSISLKSIEFFEDILLGIKRCADRFGVKVVGGDIDFSEITTIAGFAIGEARRHITRRGAKVGEGVFITDLPGKAQLCLEMLERGAKREELPYAEKLYTPVPRIEEGMRIARYASAMTDVSDSLAVSLHQISQSSNVKIVLDNIVLSHLSPAENALELFLYGGGDFELVYTAKSSDDGIRIGRVERGKGVFAEIDGKTFEVEFRGYSHF.

D32, T46, and D48 together coordinate Mg(2+). D55 is a substrate binding site. Residues D76 and D121 each coordinate Mg(2+). ATP contacts are provided by residues 120–121 (GD) and R144. Position 206 (D206) interacts with Mg(2+). Residue S208 participates in ATP binding. D209 is a binding site for Mg(2+). Y293 provides a ligand contact to substrate.

Belongs to the thiamine-monophosphate kinase family.

The enzyme catalyses thiamine phosphate + ATP = thiamine diphosphate + ADP. It functions in the pathway cofactor biosynthesis; thiamine diphosphate biosynthesis; thiamine diphosphate from thiamine phosphate: step 1/1. Functionally, catalyzes the ATP-dependent phosphorylation of thiamine-monophosphate (TMP) to form thiamine-pyrophosphate (TPP), the active form of vitamin B1. This is Thiamine-monophosphate kinase from Archaeoglobus fulgidus (strain ATCC 49558 / DSM 4304 / JCM 9628 / NBRC 100126 / VC-16).